Reading from the N-terminus, the 453-residue chain is MWSILKAVRENPEILYESQRRRGLSVDIVDRAIELDRKWREELKRVNQLRKRRNELARAVKEAKGEERAKVIEEAKAVSEEVKRAEEELKRLEAELEEVLLSIPNIIHESVPVGKDDSENVPIKYWGKAKVYFEDVDAFVEMTQGMAEYEVTDVKPIGHADAVEIFGWADLERAAKVAGARFYYLLNDLVWLDFALTMYALDFLRKEDFTIVSPPYMMRREAYSGVTAFSDFEEVIYKVEDEDLYLIATSEHPIAAMHMREVLEERELPLLYAGVSPCFRKEAGAHGKDTKGIFRVHQFNKVEQFVFCLPEQSWEWHEKLIENVEKLWQGLGIPYRIVNICTGDLGIVAAKKYDLEAWMPAQAKYREMVSCSNCTDWQSYRLDIRFAEERGKPSKGFVHTLNSTAIATTRAITAIIENFQLEDGRVEIPRVLRKYLEPIESAPKDFIMPAKSQ.

249–251 (TSE) serves as a coordination point for L-serine. ATP is bound by residues 280–282 (RKE) and Val296. Residue Glu303 participates in L-serine binding. 367–370 (EMVS) contributes to the ATP binding site. Thr404 provides a ligand contact to L-serine.

The protein belongs to the class-II aminoacyl-tRNA synthetase family. Type-1 seryl-tRNA synthetase subfamily. As to quaternary structure, homodimer. The tRNA molecule binds across the dimer.

It is found in the cytoplasm. It carries out the reaction tRNA(Ser) + L-serine + ATP = L-seryl-tRNA(Ser) + AMP + diphosphate + H(+). The catalysed reaction is tRNA(Sec) + L-serine + ATP = L-seryl-tRNA(Sec) + AMP + diphosphate + H(+). Its pathway is aminoacyl-tRNA biosynthesis; selenocysteinyl-tRNA(Sec) biosynthesis; L-seryl-tRNA(Sec) from L-serine and tRNA(Sec): step 1/1. Its function is as follows. Catalyzes the attachment of serine to tRNA(Ser). Is also able to aminoacylate tRNA(Sec) with serine, to form the misacylated tRNA L-seryl-tRNA(Sec), which will be further converted into selenocysteinyl-tRNA(Sec). This is Serine--tRNA ligase from Archaeoglobus fulgidus (strain ATCC 49558 / DSM 4304 / JCM 9628 / NBRC 100126 / VC-16).